The primary structure comprises 233 residues: Methylthioribulose-1-phosphate dehydratase (233 aa).

Cys91 is a binding site for substrate. Zn(2+) contacts are provided by His108 and His110. The Proton donor/acceptor role is filled by Glu137. Residue His194 coordinates Zn(2+).

The protein belongs to the aldolase class II family. MtnB subfamily. Zn(2+) is required as a cofactor.

It localises to the cytoplasm. The catalysed reaction is 5-(methylsulfanyl)-D-ribulose 1-phosphate = 5-methylsulfanyl-2,3-dioxopentyl phosphate + H2O. Its pathway is amino-acid biosynthesis; L-methionine biosynthesis via salvage pathway; L-methionine from S-methyl-5-thio-alpha-D-ribose 1-phosphate: step 2/6. Its function is as follows. Catalyzes the dehydration of methylthioribulose-1-phosphate (MTRu-1-P) into 2,3-diketo-5-methylthiopentyl-1-phosphate (DK-MTP-1-P). This Phaeosphaeria nodorum (strain SN15 / ATCC MYA-4574 / FGSC 10173) (Glume blotch fungus) protein is Methylthioribulose-1-phosphate dehydratase.